The following is a 135-amino-acid chain: Fatty acid-binding protein 5 (135 aa).

At alanine 2 the chain carries N-acetylalanine. At lysine 17 the chain carries N6-acetyllysine. Tyrosine 22 carries the post-translational modification Phosphotyrosine; by Tyr-kinases. The short motif at lysine 24 to lysine 34 is the Nuclear localization signal element. Residues cysteine 43 and arginine 109 each contribute to the N-eicosanoyl ethanolamine site. Cysteines 120 and 127 form a disulfide. (9Z,12Z)-octadecadienoate is bound at residue arginine 129–tyrosine 131. Tyrosine 131 contributes to the N-eicosanoyl ethanolamine binding site. Tyrosine 131 is a hexadecanoate binding site. Tyrosine 131 carries the post-translational modification Phosphotyrosine.

The protein belongs to the calycin superfamily. Fatty-acid binding protein (FABP) family. Monomer. In terms of tissue distribution, most abundant in lens and retina (found in the mueller cells), moderately abundant in heart and testis (found in the Sertoli cells), and present in very low amounts in lung.

Its subcellular location is the cytoplasm. It localises to the nucleus. It is found in the synapse. The protein localises to the postsynaptic density. The protein resides in the secreted. It carries out the reaction hexadecanoate(out) = hexadecanoate(in). The catalysed reaction is (9Z,12Z)-octadecadienoate(out) = (9Z,12Z)-octadecadienoate(in). It catalyses the reaction (9Z)-octadecenoate(out) = (9Z)-octadecenoate(in). Functionally, intracellular carrier for long-chain fatty acids and related active lipids, such as endocannabinoids, that regulate the metabolism and actions of the ligands they bind. In addition to the cytosolic transport, selectively delivers specific fatty acids from the cytosol to the nucleus, wherein they activate nuclear receptors. Delivers retinoic acid to the nuclear receptor peroxisome proliferator-activated receptor delta; which promotes proliferation and survival. May also serve as a synaptic carrier of endocannabinoid at central synapses and thus controls retrograde endocannabinoid signaling. Modulates inflammation by regulating PTGES induction via NF-kappa-B activation, and prostaglandin E2 (PGE2) biosynthesis during inflammation. The polypeptide is Fatty acid-binding protein 5 (FABP5) (Bos taurus (Bovine)).